A 341-amino-acid polypeptide reads, in one-letter code: Zinc finger protein ZIC 4 (341 aa).

Residues 36 to 66 form a disordered region; the sequence is HHGPQLAASSNPSVLPGLHEQPPQASHSRPL. Residues 135-169 form a C2H2-type 1; atypical zinc finger; sequence LICKWLGDDSPMSPRPCSKTFSTMHELVTHVTVEH. A C2H2-type 2; atypical zinc finger spans residues 178–205; sequence HICFWEECPRQGKPFKAKYKLVNHIRVH. C2H2-type zinc fingers lie at residues 211-235, 241-265, and 271-295; these read FPCPFPGCGKVFARSENLKIHKRTH, FRCEFEGCERRFANSSDRKKHSHVH, and YMCKVRGCDKCYTHPSSLRKHMKVH. The interval 289–309 is disordered; the sequence is RKHMKVHGRSPPPSSGYDSAI.

It belongs to the GLI C2H2-type zinc-finger protein family. Exclusively expressed in the cerebellum.

It localises to the nucleus. Its function is as follows. Binds to DNA. In Mus musculus (Mouse), this protein is Zinc finger protein ZIC 4 (Zic4).